A 502-amino-acid chain; its full sequence is Glutamate dehydrogenase, mitochondrial (502 aa).

96–98 (HHR) is an NAD(+) binding site. K102 and K126 together coordinate substrate. Residue D131 coordinates NAD(+). Residue K138 is part of the active site. S394 contributes to the substrate binding site.

This sequence belongs to the Glu/Leu/Phe/Val dehydrogenases family. Homohexamer.

It is found in the mitochondrion matrix. The enzyme catalyses L-glutamate + NAD(+) + H2O = 2-oxoglutarate + NH4(+) + NADH + H(+). The catalysed reaction is L-glutamate + NADP(+) + H2O = 2-oxoglutarate + NH4(+) + NADPH + H(+). Subject to allosteric regulation. Activated by AMP and ADP. This chain is Glutamate dehydrogenase, mitochondrial (gluD), found in Dictyostelium discoideum (Social amoeba).